The chain runs to 145 residues: Mediator of RNA polymerase II transcription subunit 21 (145 aa).

Positions Glu79–Asp112 form a coiled coil.

Belongs to the Mediator complex subunit 21 family. As to quaternary structure, component of the Mediator complex.

It localises to the nucleus. Component of the Mediator complex, a coactivator involved in the regulated transcription of nearly all RNA polymerase II-dependent genes. Mediator functions as a bridge to convey information from gene-specific regulatory proteins to the basal RNA polymerase II transcription machinery. Mediator is recruited to promoters by direct interactions with regulatory proteins and serves as a scaffold for the assembly of a functional preinitiation complex with RNA polymerase II and the general transcription factors. This is Mediator of RNA polymerase II transcription subunit 21 (med21) from Danio rerio (Zebrafish).